A 507-amino-acid chain; its full sequence is Maturase K (507 aa).

This sequence belongs to the intron maturase 2 family. MatK subfamily.

It is found in the plastid. Its subcellular location is the chloroplast. Usually encoded in the trnK tRNA gene intron. Probably assists in splicing its own and other chloroplast group II introns. In Araucaria heterophylla (Norfolk Island pine), this protein is Maturase K.